The primary structure comprises 500 residues: Monocarboxylate transporter 1 (500 aa).

At 1–22 the chain is on the cytoplasmic side; it reads MPPAVGGPVGYTPPDGGWGWAV. A helical transmembrane segment spans residues 23-44; sequence VIGAFISIGFSYAFPKSITVFF. Residue Lys-38 coordinates (S)-lactate. Topologically, residues 45-55 are extracellular; sequence KEIEGIFHATT. Residues 56–80 traverse the membrane as a helical segment; that stretch reads SEVSWISSIMLAVMYGGGPISSILV. Residues 81–84 are Cytoplasmic-facing; it reads NKYG. The chain crosses the membrane as a helical span at residues 85–105; sequence SRIVMIVGGCLSGCGLIAASF. Residues 106–109 lie on the Extracellular side of the membrane; that stretch reads CNTV. Residues 110–132 form a helical membrane-spanning segment; sequence QQLYVCIGVIGGLGLAFNLNPAL. The Cytoplasmic portion of the chain corresponds to 133 to 146; sequence TMIGKYFYKRRPLA. Residues 147 to 169 traverse the membrane as a helical segment; it reads NGLAMAGSPVFLCTLAPLNQVFF. Residues 170–174 lie on the Extracellular side of the membrane; it reads GIFGW. The helical transmembrane segment at 175–194 threads the bilayer; the sequence is RGSFLILGGLLLNCCVAGAL. The Cytoplasmic portion of the chain corresponds to 195–261; sequence MRPIGPKPTK…FLDLTLFTHR (67 aa). Ser-210 and Ser-213 each carry phosphoserine. Thr-231 carries the phosphothreonine modification. A helical membrane pass occupies residues 262 to 288; the sequence is GFLLYLSGNVIMFFGLFAPLVFLSSYG. The Extracellular portion of the chain corresponds to 289–295; that stretch reads KSQHYSS. A helical membrane pass occupies residues 296-317; the sequence is EKSAFLLSILAFVDMVARPSMG. Asp-309 provides a ligand contact to H(+). Arg-313 serves as a coordination point for (S)-lactate. Residues 318-328 are Cytoplasmic-facing; sequence LVANTKPIRPR. Residues 329–349 form a helical membrane-spanning segment; that stretch reads IQYFFAASVVANGVCHMLAPL. At 350-353 the chain is on the extracellular side; the sequence is STTY. A helical membrane pass occupies residues 354–375; it reads VGFCVYAGFFGFAFGWLSSVLF. Topologically, residues 376–389 are cytoplasmic; it reads ETLMDLVGPQRFSS. A helical membrane pass occupies residues 390-410; the sequence is AVGLVTIVECCPVLLGPPLLG. Over 411-421 the chain is Extracellular; it reads RLNDMYGDYKY. A helical membrane pass occupies residues 422-443; it reads TYWACGVVLIISGIYLFIGMGI. Over 444–500 the chain is Cytoplasmic; it reads NYRLLAKEQKANEQKKESKEEETSIDVAGKPNEVTKAAESPDQKDTDGGPKEEESPV. Positions 454 to 465 are enriched in basic and acidic residues; the sequence is ANEQKKESKEEE. Residues 454–500 form a disordered region; sequence ANEQKKESKEEETSIDVAGKPNEVTKAAESPDQKDTDGGPKEEESPV. Residue Ser-461 is modified to Phosphoserine. Position 466 is a phosphothreonine (Thr-466). 3 positions are modified to phosphoserine: Ser-467, Ser-483, and Ser-498. Basic and acidic residues predominate over residues 482–500; it reads ESPDQKDTDGGPKEEESPV.

This sequence belongs to the major facilitator superfamily. Monocarboxylate porter (TC 2.A.1.13) family. Interacts with EMB; interaction mediates SLC16A1 targeting to the plasma membrane. Interacts with isoform 2 of BSG; interaction mediates SLC16A1 targeting to the plasma membrane. Widely expressed. Detected in heart and in blood lymphocytes and monocytes (at protein level).

It is found in the cell membrane. Its subcellular location is the basolateral cell membrane. The protein localises to the apical cell membrane. The enzyme catalyses (S)-lactate(in) + H(+)(in) = (S)-lactate(out) + H(+)(out). The catalysed reaction is acetate(out) + H(+)(out) = acetate(in) + H(+)(in). It catalyses the reaction acetoacetate(out) + H(+)(out) = acetoacetate(in) + H(+)(in). It carries out the reaction pyruvate(out) + H(+)(out) = pyruvate(in) + H(+)(in). The enzyme catalyses (R)-3-hydroxybutanoate(out) + H(+)(out) = (R)-3-hydroxybutanoate(in) + H(+)(in). The catalysed reaction is 3-methyl-2-oxobutanoate(out) + H(+)(out) = 3-methyl-2-oxobutanoate(in) + H(+)(in). It catalyses the reaction 4-methyl-2-oxopentanoate(out) + H(+)(out) = 4-methyl-2-oxopentanoate(in) + H(+)(in). It carries out the reaction succinate(in) + 2 H(+)(in) = succinate(out) + 2 H(+)(out). With respect to regulation, selectively inhibited by AZD3965, that acts as a competitive inhibitor binding to the central channel in the outward open conformation. In terms of biological role, bidirectional proton-coupled monocarboxylate transporter. Catalyzes the rapid transport across the plasma membrane of many monocarboxylates such as lactate, pyruvate, acetate and the ketone bodies acetoacetate and beta-hydroxybutyrate, and thus contributes to the maintenance of intracellular pH. The transport direction is determined by the proton motive force and the concentration gradient of the substrate monocarboxylate. MCT1 is a major lactate exporter. Plays a role in cellular responses to a high-fat diet by modulating the cellular levels of lactate and pyruvate that contribute to the regulation of central metabolic pathways and insulin secretion, with concomitant effects on plasma insulin levels and blood glucose homeostasis. Facilitates the protonated monocarboxylate form of succinate export, that its transient protonation upon muscle cell acidification in exercising muscle and ischemic heart. Functions via alternate outward- and inward-open conformation states. Protonation and deprotonation of 309-Asp is essential for the conformational transition. The chain is Monocarboxylate transporter 1 from Homo sapiens (Human).